Reading from the N-terminus, the 251-residue chain is uncharacterized protein (251 aa).

A signal peptide spans 1–18 (MKILIILSIILCSLFGRA).

Belongs to the MlaA family.

This is an uncharacterized protein from Rickettsia prowazekii (strain Madrid E).